The following is a 501-amino-acid chain: GMP synthase [glutamine-hydrolyzing] (501 aa).

A Glutamine amidotransferase type-1 domain is found at 1–185; the sequence is MVLVVDYGSQ…LFNVCKLEKN (185 aa). Residue Cys-75 is the Nucleophile of the active site. Residues His-159 and Glu-161 contribute to the active site. The GMPS ATP-PPase domain occupies 186–376; the sequence is WKIGDLVEEK…LGIPDRIINR (191 aa). 213–219 provides a ligand contact to ATP; the sequence is SGGVDSS.

In terms of assembly, homodimer.

It catalyses the reaction XMP + L-glutamine + ATP + H2O = GMP + L-glutamate + AMP + diphosphate + 2 H(+). The protein operates within purine metabolism; GMP biosynthesis; GMP from XMP (L-Gln route): step 1/1. Functionally, catalyzes the synthesis of GMP from XMP. This chain is GMP synthase [glutamine-hydrolyzing] (guaA), found in Thermotoga maritima (strain ATCC 43589 / DSM 3109 / JCM 10099 / NBRC 100826 / MSB8).